We begin with the raw amino-acid sequence, 386 residues long: Trichocyst matrix protein T2-A (386 aa).

The N-terminal stretch at 1 to 19 is a signal peptide; it reads MKTVILALALIVLASSTQA. Residues 20–48 constitute a propeptide that is removed on maturation; it reads DVIATIKKIDQSPFGRTLFDTIYLELQTG. Residues 51-154 are a coiled coil; that stretch reads LDRLLSTLTD…AEEHEDFEEK (104 aa). A propeptide spanning residues 184 to 238 is cleaved from the precursor; that stretch reads KGKATKQTHKFTKEVASMIQKHFTTSAKKTAKFQHRKGYSKLFKAFATIASKVEQ. The stretch at 293-332 forms a coiled coil; the sequence is SALANATSDLASLNDIIAQVEASLDTTEQRIENVSADRHD.

Belongs to the TMP family.

The protein localises to the trichocyst. Its function is as follows. Structural protein that crystallize inside the trichocyst matrix. The polypeptide is Trichocyst matrix protein T2-A (T2A) (Paramecium tetraurelia).